The chain runs to 173 residues: Insertion element IS150 protein InsJ (173 aa).

It belongs to the IS150/IS1296 orfA family.

This is Insertion element IS150 protein InsJ (insJ) from Escherichia coli (strain K12).